Here is a 211-residue protein sequence, read N- to C-terminus: dITP/XTP pyrophosphatase (211 aa).

7–12 serves as a coordination point for substrate; it reads TSNKKK. Mg(2+)-binding residues include Glu-43 and Asp-72. The active-site Proton acceptor is the Asp-72. Substrate-binding positions include Ser-73, 169 to 172, Lys-190, and 195 to 196; these read FGYD and HR.

This sequence belongs to the HAM1 NTPase family. Homodimer. Mg(2+) is required as a cofactor.

The enzyme catalyses XTP + H2O = XMP + diphosphate + H(+). It catalyses the reaction dITP + H2O = dIMP + diphosphate + H(+). The catalysed reaction is ITP + H2O = IMP + diphosphate + H(+). In terms of biological role, pyrophosphatase that catalyzes the hydrolysis of nucleoside triphosphates to their monophosphate derivatives, with a high preference for the non-canonical purine nucleotides XTP (xanthosine triphosphate), dITP (deoxyinosine triphosphate) and ITP. Seems to function as a house-cleaning enzyme that removes non-canonical purine nucleotides from the nucleotide pool, thus preventing their incorporation into DNA/RNA and avoiding chromosomal lesions. The polypeptide is dITP/XTP pyrophosphatase (Hydrogenobaculum sp. (strain Y04AAS1)).